A 278-amino-acid chain; its full sequence is S-formylglutathione hydrolase YeiG (278 aa).

Catalysis depends on charge relay system residues Ser145, Asp223, and His256.

This sequence belongs to the esterase D family.

The enzyme catalyses S-formylglutathione + H2O = formate + glutathione + H(+). Its function is as follows. Serine hydrolase involved in the detoxification of formaldehyde. Hydrolyzes S-formylglutathione to glutathione and formate. This is S-formylglutathione hydrolase YeiG (yeiG) from Escherichia coli O139:H28 (strain E24377A / ETEC).